The primary structure comprises 1097 residues: Putative regulator of nonsense transcripts 1 (1097 aa).

The segment covering 42–53 (SQTQTQGHTQSQ) has biased composition (low complexity). The tract at residues 42-67 (SQTQTQGHTQSQLDNQLNGPDDGLHN) is disordered. Residues 96–254 (TKDLPVHACR…NKLEELWKDN (159 aa)) enclose the Upf1 CH-rich domain. Zn(2+)-binding residues include C104, C108, C119, S122, C127, H137, H141, C147, C165, C168, C191, and C195. The interval 104 to 137 (CRSYCGIHDPACVVYCNTSKKWFCNGRGNTSGSH) is C3H. The CC/SHH/C stretch occupies residues 119 to 147 (CNTSKKWFCNGRGNTSGSHIVNHLVRAKC). Residues 165–195 (CYNCGCRNVFLLGFIPAKADSVVVLLCRQPC) are C4. ATP is bound by residues Q457, 474–481 (GPPGTGKT), Y683, and E813. Residues 977 to 998 (QGQTNGPAAGRGAMKGKSGRGG) are disordered.

It belongs to the DNA2/NAM7 helicase family.

The protein resides in the cytoplasm. Its subcellular location is the P-body. It catalyses the reaction ATP + H2O = ADP + phosphate + H(+). RNA-dependent helicase required for nonsense-mediated decay (NMD) of aberrant mRNAs containing premature stop codons and modulates the expression level of normal mRNAs. The formation of an rent1-rent2-rent3 surveillance complex is believed to activate NMD. The chain is Putative regulator of nonsense transcripts 1 (rent1) from Takifugu rubripes (Japanese pufferfish).